Here is a 141-residue protein sequence, read N- to C-terminus: Superoxide dismutase [Cu-Zn], chloroplastic (141 aa).

3 residues coordinate Cu cation: H33, H35, and H50. C44 and C133 are disulfide-bonded. Positions 50, 58, 67, and 70 each coordinate Zn(2+). H107 serves as a coordination point for Cu cation.

It belongs to the Cu-Zn superoxide dismutase family. In terms of assembly, homotetramer. Cu cation is required as a cofactor. It depends on Zn(2+) as a cofactor.

It localises to the plastid. The protein resides in the chloroplast. It carries out the reaction 2 superoxide + 2 H(+) = H2O2 + O2. In terms of biological role, destroys radicals which are normally produced within the cells and which are toxic to biological systems. This Pinus sylvestris (Scotch pine) protein is Superoxide dismutase [Cu-Zn], chloroplastic (SODCP).